A 64-amino-acid chain; its full sequence is Large ribosomal subunit protein bL35 (64 aa).

The interval 1–28 (MPKVKTKSGAKKRFKLTGSGKIKRKSAY) is disordered.

The protein belongs to the bacterial ribosomal protein bL35 family.

In Cytophaga hutchinsonii (strain ATCC 33406 / DSM 1761 / CIP 103989 / NBRC 15051 / NCIMB 9469 / D465), this protein is Large ribosomal subunit protein bL35.